The sequence spans 165 residues: Transcription antitermination protein NusB (165 aa).

Residues 1–27 form a disordered region; it reads MISDDTDQFNPRDAKSPEIAKGKSAKR. Positions 10–21 are enriched in basic and acidic residues; it reads NPRDAKSPEIAK.

This sequence belongs to the NusB family.

Functionally, involved in transcription antitermination. Required for transcription of ribosomal RNA (rRNA) genes. Binds specifically to the boxA antiterminator sequence of the ribosomal RNA (rrn) operons. This chain is Transcription antitermination protein NusB, found in Pseudomonas syringae pv. tomato (strain ATCC BAA-871 / DC3000).